The primary structure comprises 612 residues: Phosphopentomutase (612 aa).

The residue at position 2 (A2) is an N-acetylalanine. R63 and S165 together coordinate alpha-D-glucose 1,6-bisphosphate. S165 (phosphoserine intermediate) is an active-site residue. Positions 165, 322, 324, and 326 each coordinate Mg(2+). At S165 the chain carries Phosphoserine. Residues D326, R327, T400, E424, and K438 each contribute to the alpha-D-glucose 1,6-bisphosphate site.

It belongs to the phosphohexose mutase family. Monomer. Mg(2+) serves as cofactor.

The protein resides in the cytoplasm. Its subcellular location is the cytosol. The enzyme catalyses alpha-D-ribose 1-phosphate = D-ribose 5-phosphate. It carries out the reaction 2-deoxy-alpha-D-ribose 1-phosphate = 2-deoxy-D-ribose 5-phosphate. It catalyses the reaction alpha-D-glucose 1-phosphate = alpha-D-glucose 6-phosphate. The catalysed reaction is O-phospho-L-seryl-[protein] + alpha-D-glucose 1-phosphate = alpha-D-glucose 1,6-bisphosphate + L-seryl-[protein]. The enzyme catalyses alpha-D-glucose 1,6-bisphosphate + L-seryl-[protein] = O-phospho-L-seryl-[protein] + alpha-D-glucose 6-phosphate. Functionally, catalyzes the conversion of the nucleoside breakdown products ribose-1-phosphate and deoxyribose-1-phosphate to the corresponding 5-phosphopentoses. Catalyzes the reversible isomerization of alpha-D-glucose 1-phosphate to alpha-D-glucose 6-phosphate but with a lower catalytic efficiency. The mechanism proceeds via the intermediate compound alpha-D-glucose 1,6-bisphosphate. In vitro, also has a low glucose 1,6-bisphosphate synthase activity which is most probably not physiologically relevant. The polypeptide is Phosphopentomutase (PGM2) (Pongo abelii (Sumatran orangutan)).